We begin with the raw amino-acid sequence, 207 residues long: Ras-related protein Rab-7a (207 aa).

Threonine 2 carries the N-acetylthreonine modification. Positions 17, 18, 19, 20, 21, 22, 23, 34, 35, 37, and 40 each coordinate GTP. Mg(2+) is bound at residue threonine 22. A Switch 1 motif is present at residues 28–41 (YVNKKFSNQYKATI). Mg(2+) is bound by residues threonine 40 and aspartate 63. Glycine 66 serves as a coordination point for GTP. Residues 67 to 82 (QERFQSLGVAFYRGAD) carry the Switch 2 motif. Serine 72 carries the post-translational modification Phosphoserine. The GTP site is built by asparagine 125, lysine 126, aspartate 128, alanine 156, and lysine 157. Glycyl lysine isopeptide (Lys-Gly) (interchain with G-Cter in ubiquitin) cross-links involve residues lysine 191 and lysine 194. 2 S-geranylgeranyl cysteine lipidation sites follow: cysteine 205 and cysteine 207. Position 207 is a cysteine methyl ester (cysteine 207).

The protein belongs to the small GTPase superfamily. Rab family. Interacts with NTRK1/TRKA, RILP, PSMA7, RNF115 and FYCO1. Interacts with the PIK3C3/VPS34-PIK3R4 complex. The GTP-bound form interacts with OSBPL1A and RAC1. Interacts with CLN3. Interacts with CHM, the substrate-binding subunit of the Rab geranylgeranyltransferase complex. Interacts with C9orf72. Does not interact with HPS4 and the BLOC-3 complex (heterodimer of HPS1 and HPS4). Interacts with CLN5. Interacts with PLEKHM1 (via N- and C-terminus). Interacts with PRPH; the interaction is direct. Interacts with VPS13A. The GDP-bound form interacts with RIMOC1. Interacts with the MON1A-CCZ1B complex and this interaction is enhanced in the presence of RIMOC1. Interacts with VPS39 and VPS41. Forms a ternary complex with LAMP2 and RUFY4; the interaction with LAMP2 is mediated by RUFY4 (via RUN and coiled coil domains). Mg(2+) is required as a cofactor. Deubiquitination at Lys-191 and Lys-194 by USP32. Post-translationally, phosphorylated at Ser-72 by LRRK1; phosphorylation is dependent on protein kinase C (PKC) activation of LRRK1. In terms of processing, prenylated. Prenylation is required for association with cellular membranes. As to expression, widely expressed. High expression in liver, heart and kidney. Found in sensory and motor neurons.

The protein resides in the cytoplasmic vesicle. Its subcellular location is the phagosome membrane. It localises to the late endosome membrane. It is found in the lysosome membrane. The protein localises to the melanosome membrane. The protein resides in the autophagosome membrane. Its subcellular location is the lipid droplet. It localises to the endosome membrane. It is found in the mitochondrion membrane. The enzyme catalyses GTP + H2O = GDP + phosphate + H(+). Its activity is regulated as follows. Regulated by guanine nucleotide exchange factors (GEFs) which promote the exchange of bound GDP for free GTP. Regulated by GTPase activating proteins (GAPs) which increase the GTP hydrolysis activity. Inhibited by GDP dissociation inhibitors (GDIs). The small GTPases Rab are key regulators of intracellular membrane trafficking, from the formation of transport vesicles to their fusion with membranes. Rabs cycle between an inactive GDP-bound form and an active GTP-bound form that is able to recruit to membranes different sets of downstream effectors directly responsible for vesicle formation, movement, tethering and fusion. In its active state, RAB7A binds to a variety of effector proteins playing a key role in the regulation of endo-lysosomal trafficking. Governs early-to-late endosomal maturation, microtubule minus-end as well as plus-end directed endosomal migration and positioning, and endosome-lysosome transport through different protein-protein interaction cascades. Also plays a central role in growth-factor-mediated cell signaling, nutrient-transporter-mediated nutrient uptake, neurotrophin transport in the axons of neurons and lipid metabolism. Also involved in regulation of some specialized endosomal membrane trafficking, such as maturation of melanosomes, pathogen-induced phagosomes (or vacuoles) and autophagosomes. Plays a role in the maturation and acidification of phagosomes that engulf pathogens, such as S.aureus and Mycobacteria. Plays a role in the fusion of phagosomes with lysosomes. In concert with RAC1, plays a role in regulating the formation of RBs (ruffled borders) in osteoclasts. Controls the endosomal trafficking and neurite outgrowth signaling of NTRK1/TRKA. Regulates the endocytic trafficking of the EGF-EGFR complex by regulating its lysosomal degradation. Involved in the ADRB2-stimulated lipolysis through lipophagy, a cytosolic lipase-independent autophagic pathway. Required for the exosomal release of SDCBP, CD63 and syndecan. Required for vesicular trafficking and cell surface expression of ACE2. May play a role in PRPH neuronal intermediate filament assembly. The polypeptide is Ras-related protein Rab-7a (Mus musculus (Mouse)).